The primary structure comprises 60 residues: Large ribosomal subunit protein bL32 (60 aa).

Residues 1–23 (MAVPKRKKSKSRRNMHRSHHAIK) are disordered.

This sequence belongs to the bacterial ribosomal protein bL32 family.

This is Large ribosomal subunit protein bL32 from Wolbachia sp. subsp. Brugia malayi (strain TRS).